We begin with the raw amino-acid sequence, 332 residues long: Invasin IpaD (332 aa).

Over residues 1–25 (MNITTLTNSISTSSFSPNNTNGSST) the composition is skewed to low complexity. Residues 1 to 43 (MNITTLTNSISTSSFSPNNTNGSSTETVNSDIKTTTSSHPVSS) form a disordered region. Positions 26–43 (ETVNSDIKTTTSSHPVSS) are enriched in polar residues. The stretch at 44-77 (LTMLNDTLHNIRTTNQALKKELSQKTLTKTSLEE) forms a coiled coil. The segment at 192 to 267 (VNSLKKALEE…KSLDNLGGNG (76 aa)) is ipaB binding.

Belongs to the invasin protein D family.

Its subcellular location is the secreted. In terms of biological role, required for bacterial invasion of host cells. Controls IpaB and IpaC secretion, and the efficiency with which they are physically inserted into target cell membranes. These proteins are exported via T3SS to form a pore in the host membrane that allows the translocation of the other effectors into the host cytoplasm. Along with IpaB, is essential for both blocking secretion through the Mxi/Spa translocon in the absence of a secretion-inducing signal, and for controlling the level of secretion in the presence of this signal. In Shigella flexneri, this protein is Invasin IpaD (ipaD).